A 90-amino-acid chain; its full sequence is UPF0237 protein MK1213 (90 aa).

The 75-residue stretch at 5 to 79 (VVTVIGADRP…EELGVDVIVQ (75 aa)) folds into the ACT domain.

The protein belongs to the UPF0237 family.

This is UPF0237 protein MK1213 from Methanopyrus kandleri (strain AV19 / DSM 6324 / JCM 9639 / NBRC 100938).